Here is a 1137-residue protein sequence, read N- to C-terminus: Protein sel-1 homolog 3 (1137 aa).

The disordered stretch occupies residues 1-42; sequence MQWRGAGLWWPRRRQQQQQQQPPPPAFGPPAAAMVPPSRGVS. 2 N-linked (GlcNAc...) asparagine glycosylation sites follow: asparagine 206 and asparagine 387. Sel1-like repeat units follow at residues 575-609, 611-647, 694-730, 732-767, 768-800, 801-839, and 840-877; these read HKAS…GQGS, RLSS…TKTP, AAAQ…LETE, PALI…SKGL, HQAV…EMGN, PDAS…QGGH, and IEGT…EKNG. Serine 613 is modified (phosphoserine). Asparagine 942 is a glycosylation site (N-linked (GlcNAc...) asparagine). One copy of the Sel1-like 8 repeat lies at 952–988; the sequence is SFAYLKMGDLYYYGHQNQSQDLELSVQMYAQAALDGD. Residues 1067 to 1087 traverse the membrane as a helical segment; that stretch reads LIYFLGTFLLSVVIAWMVLYL. A disordered region spans residues 1100-1137; it reads AWVSADPTSSTPSPAVPPAADASDHDPPMMANGPEPRG. A compositionally biased stretch (low complexity) spans 1102-1120; that stretch reads VSADPTSSTPSPAVPPAAD.

The protein localises to the membrane. In Mus musculus (Mouse), this protein is Protein sel-1 homolog 3 (Sel1l3).